The sequence spans 466 residues: Probable Xaa-Pro aminopeptidase pepP (466 aa).

Mn(2+)-binding residues include D264, D275, E398, and E438.

This sequence belongs to the peptidase M24B family. Mn(2+) is required as a cofactor.

It catalyses the reaction Release of any N-terminal amino acid, including proline, that is linked to proline, even from a dipeptide or tripeptide.. Catalyzes the removal of a penultimate prolyl residue from the N-termini of peptides. The sequence is that of Probable Xaa-Pro aminopeptidase pepP (pepP) from Aspergillus niger (strain ATCC MYA-4892 / CBS 513.88 / FGSC A1513).